A 346-amino-acid polypeptide reads, in one-letter code: MIQFHIEAPDKGLEAALQDKIDNLTKPKGSLGTLEALALQVGLIQQTLSPVLRHPVNVIYASDHGIADEGVSKSPKEVTRQVIHNFLNGGAGVCYLARQHGFELKIVDGGVDFDFPVIPQLIDRKVRKGGTRNFLHEAAMTVEEMEKALQYGADIVTDCYNEGCNVISFGEMGIGNTAASSMWMTCLTQIPLIDCVGAGSGLDSEGVRHKYNVLKRSLENYKGDGSALDVMRYFGGYEMVMAVGGMLRAAELKMIILVDGFIMTNCVLVASRLYPEMQSYCVFGHCGDEAGHKRVLDFLGAKALLDLGLRLGEGSGSVCAYPILDSAVRMINEMHSFKQAAITKYF.

Residue Glu-313 is the Proton acceptor of the active site.

The protein belongs to the CobT family.

It catalyses the reaction 5,6-dimethylbenzimidazole + nicotinate beta-D-ribonucleotide = alpha-ribazole 5'-phosphate + nicotinate + H(+). It participates in nucleoside biosynthesis; alpha-ribazole biosynthesis; alpha-ribazole from 5,6-dimethylbenzimidazole: step 1/2. In terms of biological role, catalyzes the synthesis of alpha-ribazole-5'-phosphate from nicotinate mononucleotide (NAMN) and 5,6-dimethylbenzimidazole (DMB). In Parabacteroides distasonis (strain ATCC 8503 / DSM 20701 / CIP 104284 / JCM 5825 / NCTC 11152), this protein is Nicotinate-nucleotide--dimethylbenzimidazole phosphoribosyltransferase.